Reading from the N-terminus, the 568-residue chain is Urease subunit alpha (568 aa).

The Urease domain occupies 131–568 (GGMDAHIHFI…LPLAQRYFLY (438 aa)). Ni(2+) contacts are provided by His136, His138, and Lys219. N6-carboxylysine is present on Lys219. Residue His221 participates in substrate binding. 2 residues coordinate Ni(2+): His248 and His274. Residue His322 is the Proton donor of the active site. Ni(2+) is bound at residue Asp362.

This sequence belongs to the metallo-dependent hydrolases superfamily. Urease alpha subunit family. Heterotrimer of UreA (gamma), UreB (beta) and UreC (alpha) subunits. Three heterotrimers associate to form the active enzyme. It depends on Ni cation as a cofactor. In terms of processing, carboxylation allows a single lysine to coordinate two nickel ions.

It localises to the cytoplasm. It catalyses the reaction urea + 2 H2O + H(+) = hydrogencarbonate + 2 NH4(+). The protein operates within nitrogen metabolism; urea degradation; CO(2) and NH(3) from urea (urease route): step 1/1. This is Urease subunit alpha from Cereibacter sphaeroides (strain KD131 / KCTC 12085) (Rhodobacter sphaeroides).